Reading from the N-terminus, the 995-residue chain is Putative pentatricopeptide repeat-containing protein At5g09950 (995 aa).

22 PPR repeats span residues 35–65 (DVYLCNNLINAYLETGDSVSARKVFDEMPLR), 66–100 (NCVSWACIVSGYSRNGEHKEALVFLRDMVKEGIFS), 101–137 (NQYAFVSVLRACQEIGSVGILFGRQIHGLMFKLSYAV), 138–169 (DAVVSNVLISMYWKCIGSVGYALCAFGDIEVK), 170–204 (NSVSWNSIISVYSQAGDQRSAFRIFSSMQYDGSRP), 205–241 (TEYTFGSLVTTACSLTEPDVRLLEQIMCTIQKSGLLT), 242–276 (DLFVGSGLVSAFAKSGSLSYARKVFNQMETRNAVT), 278–303 (NGLMVGLVRQKWGEEATKLFMDMNSM), 307–342 (SPESYVILLSSFPEYSLAEEVGLKKGREVHGHVITT), 348–378 (MVGIGNGLVNMYAKCGSIADARRVFYFMTDK), 379–413 (DSVSWNSMITGLDQNGCFIEAVERYKSMRRHDILP), 414–448 (GSFTLISSLSSCASLKWAKLGQQIHGESLKLGIDL), 449–483 (NVSVSNALMTLYAETGYLNECRKIFSSMPEHDQVS), 484–515 (WNSIIGALARSERSLPEAVVCFLNAQRAGQKL), 516–550 (NRITFSSVLSAVSSLSFGELGKQIHGLALKNNIAD), 551–581 (EATTENALIACYGKCGEMDGCEKIFSRMAER), 583–617 (DNVTWNSMISGYIHNELLAKALDLVWFMLQTGQRL), 618–652 (DSFMYATVLSAFASVATLERGMEVHACSVRACLES), 653–683 (DVVVGSALVDMYSKCGRLDYALRFFNTMPVR), 684–718 (NSYSWNSMISGYARHGQGEEALKLFETMKLDGQTP), 720–750 (DHVTFVGVLSACSHAGLLEEGFKHFESMSDS), and 756–786 (RIEHFSCMADVLGRAGELDKLEDFIEKMPMK). A type E motif region spans residues 791–868 (IWRTVLGACC…EAGYSWVTMK (78 aa)). A type E(+) motif region spans residues 869-899 (DGVHMFVAGDKSHPDADVIYKKLKELNRKMR). The tract at residues 900–995 (DAGYVPQTGF…DGACSCSDFW (96 aa)) is type DYW motif.

Belongs to the PPR family. PCMP-H subfamily.

The chain is Putative pentatricopeptide repeat-containing protein At5g09950 (PCMP-H35) from Arabidopsis thaliana (Mouse-ear cress).